The chain runs to 379 residues: UDP-4-amino-4-deoxy-L-arabinose--oxoglutarate aminotransferase (379 aa).

Lysine 182 is subject to N6-(pyridoxal phosphate)lysine.

It belongs to the DegT/DnrJ/EryC1 family. ArnB subfamily. Homodimer. The cofactor is pyridoxal 5'-phosphate.

It carries out the reaction UDP-4-amino-4-deoxy-beta-L-arabinose + 2-oxoglutarate = UDP-beta-L-threo-pentopyranos-4-ulose + L-glutamate. The protein operates within nucleotide-sugar biosynthesis; UDP-4-deoxy-4-formamido-beta-L-arabinose biosynthesis; UDP-4-deoxy-4-formamido-beta-L-arabinose from UDP-alpha-D-glucuronate: step 2/3. It participates in bacterial outer membrane biogenesis; lipopolysaccharide biosynthesis. Functionally, catalyzes the conversion of UDP-4-keto-arabinose (UDP-Ara4O) to UDP-4-amino-4-deoxy-L-arabinose (UDP-L-Ara4N). The modified arabinose is attached to lipid A and is required for resistance to polymyxin and cationic antimicrobial peptides. This chain is UDP-4-amino-4-deoxy-L-arabinose--oxoglutarate aminotransferase, found in Escherichia fergusonii (strain ATCC 35469 / DSM 13698 / CCUG 18766 / IAM 14443 / JCM 21226 / LMG 7866 / NBRC 102419 / NCTC 12128 / CDC 0568-73).